Here is a 191-residue protein sequence, read N- to C-terminus: Flavin reductase (NADH) (191 aa).

46–52 (YGLTCSA) lines the FAD pocket. Position 55 (Ser-55) interacts with NAD(+). 72-73 (RV) provides a ligand contact to FAD. NAD(+) contacts are provided by residues His-144 and 166–169 (YWRR).

The protein belongs to the non-flavoprotein flavin reductase family.

The catalysed reaction is a reduced flavin + NAD(+) = an oxidized flavin + NADH + 2 H(+). Functionally, catalyzes the reduction of flavin by NADH. Subsequently, the reduced flavins is transferred to the tetracycline 7-halogenase CtcP. The sequence is that of Flavin reductase (NADH) from Kitasatospora aureofaciens (Streptomyces aureofaciens).